The chain runs to 223 residues: Uracil-DNA glycosylase (223 aa).

Aspartate 64 (proton acceptor) is an active-site residue.

The protein belongs to the uracil-DNA glycosylase (UDG) superfamily. UNG family.

The protein resides in the cytoplasm. It carries out the reaction Hydrolyzes single-stranded DNA or mismatched double-stranded DNA and polynucleotides, releasing free uracil.. Its function is as follows. Excises uracil residues from the DNA which can arise as a result of misincorporation of dUMP residues by DNA polymerase or due to deamination of cytosine. This chain is Uracil-DNA glycosylase, found in Desulfitobacterium hafniense (strain DSM 10664 / DCB-2).